The sequence spans 287 residues: Syntaxin-11 (287 aa).

Positions 41 to 71 form a coiled coil; that stretch reads LESLYRVIQDIQDENQLLLIDVRRLGRQNVR. The 63-residue stretch at 204–266 folds into the t-SNARE coiled-coil homology domain; sequence LNEIESRHRE…GEAKAQVRKA (63 aa).

Belongs to the syntaxin family. Interacts with the SNARE proteins SNAP-23 and VAMP.

The protein localises to the membrane. It is found in the golgi apparatus. Its subcellular location is the trans-Golgi network membrane. SNARE that acts to regulate protein transport between late endosomes and the trans-Golgi network. The protein is Syntaxin-11 (Stx11) of Mus musculus (Mouse).